We begin with the raw amino-acid sequence, 505 residues long: RNA-splicing ligase RtcB homolog (505 aa).

Mn(2+)-binding residues include aspartate 119, cysteine 122, histidine 227, histidine 259, and histidine 353. 226–230 serves as a coordination point for GMP; sequence NHYAE. GMP-binding positions include 353–354, 402–405, serine 409, 428–431, and lysine 504; these read HN, GGSM, and HGAG. Residue histidine 428 is the GMP-histidine intermediate of the active site.

The protein belongs to the RtcB family. Catalytic component of the tRNA-splicing ligase complex. It depends on Mn(2+) as a cofactor.

It is found in the nucleus. The protein resides in the cytoplasm. The enzyme catalyses a 3'-end 3'-phospho-ribonucleotide-RNA + a 5'-end dephospho-ribonucleoside-RNA + GTP = a ribonucleotidyl-ribonucleotide-RNA + GMP + diphosphate. It catalyses the reaction a 3'-end 2',3'-cyclophospho-ribonucleotide-RNA + a 5'-end dephospho-ribonucleoside-RNA + GTP + H2O = a ribonucleotidyl-ribonucleotide-RNA + GMP + diphosphate + H(+). In terms of biological role, catalytic subunit of the tRNA-splicing ligase complex that acts by directly joining spliced tRNA halves to mature-sized tRNAs. Required for the ligation of mRNAs and specifically, regulates xbp-1 mRNA splicing during the endoplasmic reticulum stress-induced unfolded protein response. Has a neuroprotective role in the age-dependent degeneration of dopamine neurons, which is mediated by xbp-1. This is RNA-splicing ligase RtcB homolog from Caenorhabditis elegans.